Here is a 346-residue protein sequence, read N- to C-terminus: GTPase Obg (346 aa).

One can recognise an Obg domain in the interval 1–159 (MKFLDEAKVY…RWIWLRLKLI (159 aa)). Residues 160–327 (ADAGLVGLPN…ALRALVAVIG (168 aa)) form the OBG-type G domain. GTP is bound by residues 166–173 (GLPNAGKS), 191–195 (FTTLH), 212–215 (DIPG), 279–282 (NKID), and 308–310 (SAA). Mg(2+) is bound by residues serine 173 and threonine 193.

It belongs to the TRAFAC class OBG-HflX-like GTPase superfamily. OBG GTPase family. In terms of assembly, monomer. Mg(2+) is required as a cofactor.

The protein resides in the cytoplasm. Functionally, an essential GTPase which binds GTP, GDP and possibly (p)ppGpp with moderate affinity, with high nucleotide exchange rates and a fairly low GTP hydrolysis rate. Plays a role in control of the cell cycle, stress response, ribosome biogenesis and in those bacteria that undergo differentiation, in morphogenesis control. The sequence is that of GTPase Obg from Bradyrhizobium diazoefficiens (strain JCM 10833 / BCRC 13528 / IAM 13628 / NBRC 14792 / USDA 110).